The sequence spans 77 residues: Cytoplasmic envelopment protein 3 (77 aa).

Residue Gly2 is the site of N-myristoyl glycine; by host attachment.

This sequence belongs to the herpesviridae cytoplasmic envelopment protein 3 family. Interacts with cytoplasmic envelopment protein 2; this interaction is essential for the proper localization of each protein to the assembly complex and thus for the production of infectious virus. Myristoylation and palmitoylation (probably on one or more of the nearby cysteines at the N-terminus) enable membrane-binding and Golgi apparatus-specific targeting and are essential for efficient packaging. Post-translationally, phosphorylated. Phosphorylation does not seem to be required for recycling to the host Golgi apparatus. Packaging is selective for underphosphorylated forms.

It is found in the virion tegument. The protein localises to the virion membrane. The protein resides in the host cell membrane. Its subcellular location is the host Golgi apparatus membrane. Its function is as follows. Plays an important role in the cytoplasmic envelopment of tegument proteins and capsids during the assembly and egress processes. Also participates in viral entry at the fusion step probably by regulating the core fusion machinery. The polypeptide is Cytoplasmic envelopment protein 3 (U71) (Human herpesvirus 6A (strain Uganda-1102) (HHV-6 variant A)).